A 369-amino-acid chain; its full sequence is Cyclin-I2 (369 aa).

A disordered region spans residues 1-116 (MASGAQLPPQ…SRKPRNLEGD (116 aa)). Low complexity-rich tracts occupy residues 64–76 (AASLHAASAAVPV) and 83–101 (APAGKTADAVPAAAPEQAP).

It belongs to the cyclin family.

In Homo sapiens (Human), this protein is Cyclin-I2 (CCNI2).